The sequence spans 398 residues: Acetate kinase (398 aa).

Residue N7 participates in Mg(2+) binding. Position 14 (K14) interacts with ATP. Residue R91 participates in substrate binding. Residue D148 is the Proton donor/acceptor of the active site. Residues 208–212, 283–285, and 331–335 each bind ATP; these read HLGNG, DSR, and GIGEN. E384 is a binding site for Mg(2+).

It belongs to the acetokinase family. As to quaternary structure, homodimer. Mg(2+) is required as a cofactor. Requires Mn(2+) as cofactor.

Its subcellular location is the cytoplasm. It catalyses the reaction acetate + ATP = acetyl phosphate + ADP. It participates in metabolic intermediate biosynthesis; acetyl-CoA biosynthesis; acetyl-CoA from acetate: step 1/2. Catalyzes the formation of acetyl phosphate from acetate and ATP. Can also catalyze the reverse reaction. The chain is Acetate kinase from Halothermothrix orenii (strain H 168 / OCM 544 / DSM 9562).